The sequence spans 494 residues: Amidophosphoribosyltransferase (494 aa).

Residues 1 to 10 (MFNYSGLNEE) constitute a propeptide that is removed on maturation. Cys-11 serves as the catalytic Nucleophile. Residues 11 to 231 (CGVFGIWNHP…AGEYVVINDK (221 aa)) enclose the Glutamine amidotransferase type-2 domain. The Mg(2+) site is built by Ser-294, Asp-356, and Asp-357.

This sequence in the C-terminal section; belongs to the purine/pyrimidine phosphoribosyltransferase family. Mg(2+) serves as cofactor.

The catalysed reaction is 5-phospho-beta-D-ribosylamine + L-glutamate + diphosphate = 5-phospho-alpha-D-ribose 1-diphosphate + L-glutamine + H2O. It functions in the pathway purine metabolism; IMP biosynthesis via de novo pathway; N(1)-(5-phospho-D-ribosyl)glycinamide from 5-phospho-alpha-D-ribose 1-diphosphate: step 1/2. Catalyzes the formation of phosphoribosylamine from phosphoribosylpyrophosphate (PRPP) and glutamine. The chain is Amidophosphoribosyltransferase from Staphylococcus aureus (strain COL).